The chain runs to 536 residues: Caspase A (536 aa).

Positions 1-273 (MVLKTIEDNC…DSQSRMPRTD (273 aa)) are cleaved as a propeptide — removed in mature form by autoprocessing. Catalysis depends on residues His-364 and Cys-406.

Belongs to the peptidase C14A family. In terms of assembly, heterodimer formed by the tight association of the large subunit p16 and the small subunit p14. In terms of processing, autocatalytic cleavage removes the propeptide and generates the two active subunits p16 and p14 in vitro. Cannot be cleaved by ced-3 in vitro. In terms of tissue distribution, isoform a: Expression is restricted to the late germline pachytene stage of meiosis I in both L4 larvae and adult hermaphrodite gonads. Isoform b: Expression is restricted to the late germline pachytene stage of meiosis I in both L4 larvae and adult hermaphrodite gonads.

It catalyses the reaction Strict requirement for an Asp residue at position P1 and has a preferred cleavage sequence of Tyr-Val-Ala-Asp-|-.. Its activity is regulated as follows. Inhibited by cysteine protease inhibitor iodoacetic acid (CH3COOI) but not by N-[N-(L-3-transcarboxirane-2-carbonyl)-leucyl]-agmatine (E-64) or benzyloxycarbonyl-DEVD-fluoro-methyl ketone (Z-DEVD-FMK). Functionally, cysteine protease which, in vitro, cleaves itself and caspase ced-3 into their mature active forms. Also cleaves, in vitro, inactive caspase csp-2 isoform b. Required maternally to induce apoptosis in a subset of cells fated to die during embryogenesis, mostly independently of the ced-9, ced-4 and ced-3 canonical apoptosis pathway. Involved in the degeneration of dopaminergic CEP neurons in response to high Mn(2+) levels. In terms of biological role, dispensable for regulating apoptosis during embryogenesis. The sequence is that of Caspase A from Caenorhabditis elegans.